The following is a 215-amino-acid chain: Probable GTP-binding protein EngB (215 aa).

An EngB-type G domain is found at 26–200 (EGIEVAFAGR…RAKLDEWFAP (175 aa)). GTP contacts are provided by residues 34 to 41 (GRSNAGKS), 61 to 65 (GRTQL), 79 to 82 (DLPG), 146 to 149 (TKAD), and 179 to 181 (FSS). Residues S41 and T63 each coordinate Mg(2+).

This sequence belongs to the TRAFAC class TrmE-Era-EngA-EngB-Septin-like GTPase superfamily. EngB GTPase family. It depends on Mg(2+) as a cofactor.

Necessary for normal cell division and for the maintenance of normal septation. The protein is Probable GTP-binding protein EngB of Aliivibrio fischeri (strain ATCC 700601 / ES114) (Vibrio fischeri).